A 505-amino-acid polypeptide reads, in one-letter code: L-carnitine/gamma-butyrobetaine antiporter (505 aa).

12 consecutive transmembrane segments (helical) span residues 10 to 30 (IEPKVFFPPLIIVGILCWLTV), 51 to 71 (WGWAFEWYMIVMLFGWFWLVF), 92 to 112 (IFMMFASCTSAAVLFWGSIEI), 143 to 163 (GPLPWATYSFLSVAFAYFFFV), 195 to 215 (FYLVALIFAMGTSLGLATPLV), 231 to 251 (LDAIIITCWIILNAICVACGL), 263 to 283 (SYLSFLMLGWVFIVSGASFIM), 316 to 336 (WTVFYWAWWVIYAIQMSIFLA), 347 to 367 (LCFGMVMGLTASTWILWTVLG), 403 to 423 (LSTATMWGFFILCFIATVTLI), 446 to 466 (LLVRIGWSVLVGIIGIVLLAL), and 475 to 495 (AIIAGGCPLFFVNIMVTLSFI).

It belongs to the BCCT transporter (TC 2.A.15) family. CaiT subfamily. Homotrimer.

The protein localises to the cell inner membrane. It carries out the reaction 4-(trimethylamino)butanoate(in) + (R)-carnitine(out) = 4-(trimethylamino)butanoate(out) + (R)-carnitine(in). It participates in amine and polyamine metabolism; carnitine metabolism. Its function is as follows. Catalyzes the exchange of L-carnitine for gamma-butyrobetaine. The polypeptide is L-carnitine/gamma-butyrobetaine antiporter (Salmonella gallinarum (strain 287/91 / NCTC 13346)).